The sequence spans 706 residues: Choline transporter-like protein 2 (706 aa).

The Cytoplasmic segment spans residues 1 to 33 (MGKEQQLYYGKHGTPQKYDPAFRGPIYNRGCTD). Residue threonine 14 is modified to Phosphothreonine. The helical transmembrane segment at 34-54 (IICCVFLFLAIVGYVAVGIIA) threads the bilayer. Residues 55-232 (WTHGDPRKVI…RIFEDYTVSW (178 aa)) are Extracellular-facing. Residues asparagine 187 and asparagine 200 are each glycosylated (N-linked (GlcNAc...) asparagine). Residues 233–253 (YWIIIGLIIAMVLSLLFIILL) traverse the membrane as a helical segment. Over 254-256 (RFL) the chain is Cytoplasmic. Residues 257 to 277 (AGIMVWVMIVMVILVLGYGIL) form a helical membrane-spanning segment. The Extracellular segment spans residues 278-315 (HCYMEYARLRGEAGSDVSLVDLGFQTDFRVYLHLRQTW). The helical transmembrane segment at 316–336 (VAFMIILSIVEVIIILLLIFL) threads the bilayer. Topologically, residues 337-364 (RKRILIAIALIKEASRAVGYVMCSLLYP) are cytoplasmic. The helical transmembrane segment at 365-385 (LVTFFLLCLCIAYWASTAIFL) threads the bilayer. The Extracellular portion of the chain corresponds to 386–457 (STSNEAVYKI…FNVFMFFWLA (72 aa)). Residues asparagine 397 and asparagine 417 are each glycosylated (N-linked (GlcNAc...) asparagine). Residues 458-480 (NFVLALGQVTLAGAFASYYWAMN) form a helical membrane-spanning segment. The Cytoplasmic portion of the chain corresponds to 481 to 504 (KPDDLPAFPLFSAFGRALRYHTGS). A helical transmembrane segment spans residues 505–525 (LAFGSLLLAIVQVIRVILEYL). Over 526 to 563 (DQRLKAAENKFAKFLMSCLKCCFWCLEKFIKFLNRNAY) the chain is Extracellular. Residues 564–584 (IMIAIYGTNFCTSARNAFFLL) form a helical membrane-spanning segment. Residues 585-599 (MRNIIRVAVLDKVTD) lie on the Cytoplasmic side of the membrane. A helical transmembrane segment spans residues 600 to 620 (FLFLLGKLLIVGSVGILAFFF). Over 621–638 (FTHRIRIVQDTAPSLNYY) the chain is Extracellular. The chain crosses the membrane as a helical span at residues 639–659 (WVPVVTVVIGSYLIAHGFFSV). Over 660 to 706 (YGMCVDTLFLCFLEDLERNDGTPERPYFMSLTLKKILNKTNKRQAEA) the chain is Cytoplasmic.

This sequence belongs to the CTL (choline transporter-like) family. In terms of assembly, interacts with COCH. N-glycosylated.

Its subcellular location is the cell membrane. The protein localises to the mitochondrion outer membrane. It carries out the reaction choline(out) + n H(+)(in) = choline(in) + n H(+)(out). The catalysed reaction is ethanolamine(out) + n H(+)(in) = ethanolamine(in) + n H(+)(out). Functionally, choline/H+ antiporter, mainly in mitochodria. Also acts as a low-affinity ethanolamine/H+ antiporter, regulating the supply of extracellular ethanolamine (Etn) for the CDP-Etn pathway, redistribute intracellular Etn and balance the CDP-Cho and CDP-Etn arms of the Kennedy pathway. In Bos taurus (Bovine), this protein is Choline transporter-like protein 2 (SLC44A2).